Reading from the N-terminus, the 450-residue chain is D-inositol 3-phosphate glycosyltransferase (450 aa).

Position 21 (His-21) interacts with 1D-myo-inositol 3-phosphate. Residues Gln-27–Pro-28 and Gly-35 each bind UDP-N-acetyl-alpha-D-glucosamine. 1D-myo-inositol 3-phosphate-binding positions include Asp-32–Asn-37, Lys-90, Tyr-123, Thr-147, and Arg-167. Positions 241, 246, and 307 each coordinate UDP-N-acetyl-alpha-D-glucosamine. Positions 316, 317, and 319 each coordinate Mg(2+). Positions 329 and 337 each coordinate UDP-N-acetyl-alpha-D-glucosamine. Mg(2+) is bound at residue Thr-343.

The protein belongs to the glycosyltransferase group 1 family. MshA subfamily. In terms of assembly, homodimer.

The catalysed reaction is 1D-myo-inositol 3-phosphate + UDP-N-acetyl-alpha-D-glucosamine = 1D-myo-inositol 2-acetamido-2-deoxy-alpha-D-glucopyranoside 3-phosphate + UDP + H(+). Catalyzes the transfer of a N-acetyl-glucosamine moiety to 1D-myo-inositol 3-phosphate to produce 1D-myo-inositol 2-acetamido-2-deoxy-glucopyranoside 3-phosphate in the mycothiol biosynthesis pathway. This is D-inositol 3-phosphate glycosyltransferase from Geodermatophilus obscurus (strain ATCC 25078 / DSM 43160 / JCM 3152 / CCUG 61914 / KCC A-0152 / KCTC 9177 / NBRC 13315 / NRRL B-3577 / G-20).